The following is a 237-amino-acid chain: Ribosomal RNA small subunit methyltransferase G (237 aa).

S-adenosyl-L-methionine contacts are provided by residues Gly-76, Phe-81, 128 to 129 (VE), and Arg-147.

It belongs to the methyltransferase superfamily. RNA methyltransferase RsmG family.

It localises to the cytoplasm. Specifically methylates the N7 position of a guanine in 16S rRNA. This Prochlorococcus marinus (strain MIT 9215) protein is Ribosomal RNA small subunit methyltransferase G.